Consider the following 417-residue polypeptide: Methylthioribose-1-phosphate isomerase (417 aa).

The Proton donor role is filled by Asp285.

It belongs to the eIF-2B alpha/beta/delta subunits family. MtnA subfamily.

The protein localises to the cytoplasm. It is found in the nucleus. The catalysed reaction is 5-(methylsulfanyl)-alpha-D-ribose 1-phosphate = 5-(methylsulfanyl)-D-ribulose 1-phosphate. It participates in amino-acid biosynthesis; L-methionine biosynthesis via salvage pathway; L-methionine from S-methyl-5-thio-alpha-D-ribose 1-phosphate: step 1/6. Functionally, catalyzes the interconversion of methylthioribose-1-phosphate (MTR-1-P) into methylthioribulose-1-phosphate (MTRu-1-P). This Lachancea thermotolerans (strain ATCC 56472 / CBS 6340 / NRRL Y-8284) (Yeast) protein is Methylthioribose-1-phosphate isomerase.